A 239-amino-acid polypeptide reads, in one-letter code: 3-dehydroquinate dehydratase (239 aa).

3-dehydroquinate is bound by residues 35 to 37 and Arg70; that span reads ELR. The active-site Proton donor/acceptor is His133. Lys160 serves as the catalytic Schiff-base intermediate with substrate. 2 residues coordinate 3-dehydroquinate: Arg202 and Gln225.

The protein belongs to the type-I 3-dehydroquinase family. Homodimer.

The catalysed reaction is 3-dehydroquinate = 3-dehydroshikimate + H2O. Its pathway is metabolic intermediate biosynthesis; chorismate biosynthesis; chorismate from D-erythrose 4-phosphate and phosphoenolpyruvate: step 3/7. Its function is as follows. Involved in the third step of the chorismate pathway, which leads to the biosynthesis of aromatic amino acids. Catalyzes the cis-dehydration of 3-dehydroquinate (DHQ) and introduces the first double bond of the aromatic ring to yield 3-dehydroshikimate. The polypeptide is 3-dehydroquinate dehydratase (Staphylococcus saprophyticus subsp. saprophyticus (strain ATCC 15305 / DSM 20229 / NCIMB 8711 / NCTC 7292 / S-41)).